We begin with the raw amino-acid sequence, 1192 residues long: MPHCGTTNSEINLNSNELISYQKKKSNEDLQKKHDKKCSINLKTSQVPDGGFNNQYTQLTANKIEQYNCNDLDKVCIVPSSRSDGMEASFSELLLSPNKLISQPWQTAEEIENWQNDSFRQRNEMFSCIYTNSMLNQQPCSQQQLLATQLLYARLLRSQLAEREFHSNKFNMVHYSGSKKTMLREDELLSTPSSQDNNNNIKLIKDIENSISCVDPPLFEFSNVHQRAEQKNKQDDKNCYSPKLKSNKEALDGYDLQHTCDFIREQKNILIDIKKKLDNLSDSSGKFRKRLSVRQSHIEVNNGSNSALEESVRRQLNGNRKSIENLLEEVKRLYNQWSSAELYYVRSLQRLGLPSEEDGEYTSTPTHTIMALAAIALSNESILPQKTNAVHSKIPDVESESDFFLTSAKPKTLVEIEDIILQLASSVNMHQSSSASTPHESYSDSVKSDCEESNSAPTCIWHSTRQTFRHKKDVEPCSTAAEIILEYASLSSSSNIETSRLLTSASNLTDVTENYNVTTQLPIVFNYNRESSAESIVTDPLLVPEFSTAPSTPSTGSNSGCSTGMVSGIFGLSQNRRKQRLARHIETLTTNSFKSNAIRGNVDNEITNQLKTSPSIRALPTENVSHLITKTLSSANASLTAQELSITNLFKERLCALQGNAGSMKTEIFPMIDAPYDLSIGSKTKHMNLEAKHTSNAQSNESKETTNDKKKPHIKKPLNAFMLYMKEMRAKVVAECTLKESAAINQILGRRWHELSREEQSKYYEKARQERQLHMELYPGWSARDNYGYVSKKKKRKKDRSTTDSGGNNMKKCRARFGLDQQSQWCKPCRRKKKCIRYMEALNGNGPAEDGSCFDEHGSQLSDDDEDDYDDDKLGGSCGSADETNKIEDEDSESLNQSMPSPGCLSGLSSLQSPSTTMSLASPLNMNANSATNVIFPASSNALLIVGADQPTAQQRPTLVSTSGSSSGSTSSISTTPNTSSTVSPVTCMTGPCLGSSQERAMMLGNRFSHLGMGLSPPVVSTSTSKSEPFFKPHPTVCNNPIFALPSIGNCSLNISSMPNTSRNPIGANPRDINNPLSINQLTKRREYKNVELIEASESKTIVAHAATSIIQHVAVNGYHANHSLLNSNLGHLHHQLNNRTENPNRSEQTMLSVSNHSVNSSECHKESDSQAIVSSNPPNAGSSDNGVISVS.

The short motif at 351–357 (LGLPSEE) is the Nuclear localization signal element. Positions 691 to 713 (AKHTSNAQSNESKETTNDKKKPH) are disordered. The HMG box DNA-binding region spans 714-782 (IKKPLNAFML…LHMELYPGWS (69 aa)). Disordered stretches follow at residues 790–812 (VSKK…NMKK), 847–916 (PAED…SPST), 955–986 (QRPT…VSPV), and 1136–1192 (QLNN…ISVS). Over residues 862-871 (SDDDEDDYDD) the composition is skewed to acidic residues. Low complexity-rich tracts occupy residues 898 to 915 (SMPS…QSPS) and 957 to 986 (PTLV…VSPV). Polar residues-rich tracts occupy residues 1140-1162 (RTEN…VNSS) and 1170-1192 (SQAI…ISVS).

This sequence belongs to the TCF/LEF family. As to quaternary structure, binds to the beta-catenin homolog arm or to gro.

The protein resides in the nucleus. Functionally, segment polarity protein. Functions together with arm to transduce the Wingless (Wg) signal in embryos and in developing adult tissues. Acts as a transcriptional activator, but in the absence of arm, it binds to gro and acts as a transcriptional repressor of wg-responsive genes. The sequence is that of Protein pangolin, isoform J from Drosophila melanogaster (Fruit fly).